We begin with the raw amino-acid sequence, 365 residues long: Mitogen-activated protein kinase HOG1A (365 aa).

One can recognise a Protein kinase domain in the interval 24–303 (YTDLQPVGMG…AADALAHPYL (280 aa)). Residues 30–38 (VGMGAFGLL) and lysine 53 each bind ATP. Aspartate 145 acts as the Proton acceptor in catalysis. Threonine 175 bears the Phosphothreonine mark. The TXY motif lies at 175 to 177 (TGY). Tyrosine 177 carries the phosphotyrosine modification.

It belongs to the protein kinase superfamily. Ser/Thr protein kinase family. MAP kinase subfamily. HOG1 sub-subfamily. Requires Mg(2+) as cofactor. Phosphorylated. Dually phosphorylated on Thr-175 and Tyr-177, which activates the enzyme. Rapidly dephosphorylated upon either hypo- or hyperosmotic shock.

It localises to the cytoplasm. Its subcellular location is the nucleus. It catalyses the reaction L-seryl-[protein] + ATP = O-phospho-L-seryl-[protein] + ADP + H(+). The enzyme catalyses L-threonyl-[protein] + ATP = O-phospho-L-threonyl-[protein] + ADP + H(+). With respect to regulation, activated by tyrosine and threonine phosphorylation. In terms of biological role, proline-directed serine/threonine-protein kinase involved in a signal transduction pathway that is activated by changes in the osmolarity of the extracellular environment. Controls osmotic regulation of transcription of target genes. The chain is Mitogen-activated protein kinase HOG1A (HOG1A) from Wallemia ichthyophaga (strain EXF-994 / CBS 113033).